Here is a 649-residue protein sequence, read N- to C-terminus: UvrABC system protein C (649 aa).

In terms of domain architecture, GIY-YIG spans S12–I91. Residues N201–T236 form the UVR domain. Residues R603–G649 form a disordered region.

It belongs to the UvrC family. As to quaternary structure, interacts with UvrB in an incision complex.

The protein resides in the cytoplasm. Its function is as follows. The UvrABC repair system catalyzes the recognition and processing of DNA lesions. UvrC both incises the 5' and 3' sides of the lesion. The N-terminal half is responsible for the 3' incision and the C-terminal half is responsible for the 5' incision. This Geobacter sp. (strain M21) protein is UvrABC system protein C.